We begin with the raw amino-acid sequence, 309 residues long: Ribosomal RNA large subunit methyltransferase F (309 aa).

This sequence belongs to the methyltransferase superfamily. METTL16/RlmF family.

The protein resides in the cytoplasm. It catalyses the reaction adenosine(1618) in 23S rRNA + S-adenosyl-L-methionine = N(6)-methyladenosine(1618) in 23S rRNA + S-adenosyl-L-homocysteine + H(+). Its function is as follows. Specifically methylates the adenine in position 1618 of 23S rRNA. The sequence is that of Ribosomal RNA large subunit methyltransferase F from Cronobacter sakazakii (strain ATCC BAA-894) (Enterobacter sakazakii).